The sequence spans 438 residues: Serine hydroxymethyltransferase (438 aa).

(6S)-5,6,7,8-tetrahydrofolate is bound by residues L119 and 123 to 125 (GHL). N6-(pyridoxal phosphate)lysine is present on K228. Residue 370 to 372 (SPF) coordinates (6S)-5,6,7,8-tetrahydrofolate.

This sequence belongs to the SHMT family. As to quaternary structure, homodimer. Pyridoxal 5'-phosphate serves as cofactor.

It localises to the cytoplasm. The catalysed reaction is (6R)-5,10-methylene-5,6,7,8-tetrahydrofolate + glycine + H2O = (6S)-5,6,7,8-tetrahydrofolate + L-serine. The protein operates within one-carbon metabolism; tetrahydrofolate interconversion. Its pathway is amino-acid biosynthesis; glycine biosynthesis; glycine from L-serine: step 1/1. In terms of biological role, catalyzes the reversible interconversion of serine and glycine with tetrahydrofolate (THF) serving as the one-carbon carrier. This reaction serves as the major source of one-carbon groups required for the biosynthesis of purines, thymidylate, methionine, and other important biomolecules. Also exhibits THF-independent aldolase activity toward beta-hydroxyamino acids, producing glycine and aldehydes, via a retro-aldol mechanism. The sequence is that of Serine hydroxymethyltransferase from Chlorobium chlorochromatii (strain CaD3).